The sequence spans 453 residues: tRNA(Ile)-lysidine synthase (453 aa).

Residue 27–32 participates in ATP binding; sequence SGGSDS.

The protein belongs to the tRNA(Ile)-lysidine synthase family.

It localises to the cytoplasm. The enzyme catalyses cytidine(34) in tRNA(Ile2) + L-lysine + ATP = lysidine(34) in tRNA(Ile2) + AMP + diphosphate + H(+). Ligates lysine onto the cytidine present at position 34 of the AUA codon-specific tRNA(Ile) that contains the anticodon CAU, in an ATP-dependent manner. Cytidine is converted to lysidine, thus changing the amino acid specificity of the tRNA from methionine to isoleucine. This is tRNA(Ile)-lysidine synthase from Rhizobium meliloti (strain 1021) (Ensifer meliloti).